A 620-amino-acid chain; its full sequence is Chaperone protein HscA homolog (620 aa).

It belongs to the heat shock protein 70 family.

Chaperone involved in the maturation of iron-sulfur cluster-containing proteins. Has a low intrinsic ATPase activity which is markedly stimulated by HscB. The chain is Chaperone protein HscA homolog from Shewanella oneidensis (strain ATCC 700550 / JCM 31522 / CIP 106686 / LMG 19005 / NCIMB 14063 / MR-1).